Consider the following 219-residue polypeptide: Interleukin-12 subunit alpha (219 aa).

Residues 1 to 22 (MCPARSLLLVATLVLLDHLSLA) form the signal peptide. 3 disulfide bridges follow: Cys37/Cys110, Cys64/Cys196, and Cys85/Cys123. 2 N-linked (GlcNAc...) asparagine glycosylation sites follow: Asn93 and Asn107.

Belongs to the IL-6 superfamily. In terms of assembly, heterodimer with IL12B; disulfide-linked. This heterodimer is known as interleukin IL-12. Heterodimer with EBI3/IL27B; not disulfide-linked. This heterodimer is known as interleukin IL-35. Interacts with NBR1; this interaction promotes IL-12 secretion.

The protein localises to the secreted. In terms of biological role, heterodimerizes with IL12B to form the IL-12 cytokine or with EBI3/IL27B to form the IL-35 cytokine. IL-12 is primarily produced by professional antigen-presenting cells (APCs) such as B-cells and dendritic cells (DCs) as well as macrophages and granulocytes and regulates T-cell and natural killer-cell responses, induces the production of interferon-gamma (IFN-gamma), favors the differentiation of T-helper 1 (Th1) cells and is an important link between innate resistance and adaptive immunity. Mechanistically, exerts its biological effects through a receptor composed of IL12R1 and IL12R2 subunits. Binding to the receptor results in the rapid tyrosine phosphorylation of a number of cellular substrates including the JAK family kinases TYK2 and JAK2. In turn, recruited STAT4 gets phosphorylated and translocates to the nucleus where it regulates cytokine/growth factor responsive genes. As part of IL-35, plays essential roles in maintaining the immune homeostasis of the liver microenvironment and also functions as an immune-suppressive cytokine. Mediates biological events through unconventional receptors composed of IL12RB2 and gp130/IL6ST heterodimers or homodimers. Signaling requires the transcription factors STAT1 and STAT4, which form a unique heterodimer that binds to distinct DNA sites. The polypeptide is Interleukin-12 subunit alpha (IL12A) (Homo sapiens (Human)).